Reading from the N-terminus, the 428-residue chain is Neuromedin-U receptor 1 (428 aa).

Residues 1–59 lie on the Extracellular side of the membrane; that stretch reads MTPPCLNCSIFPGALSPNASRSPLVCNISEFKWPYQPEDLNLTDEALRLKYLGPQQMKQ. Residues N27 and N41 are each glycosylated (N-linked (GlcNAc...) asparagine). The chain crosses the membrane as a helical span at residues 60-80; sequence FVPICVTYLLIFVVGTLGNGL. The Cytoplasmic portion of the chain corresponds to 81–96; that stretch reads TCTVILRNKTMRTPTN. A helical transmembrane segment spans residues 97–117; the sequence is FYLFSLAVSDMLVLLVGLPLE. Topologically, residues 118 to 137 are extracellular; it reads LYEMQQNYPFQLGASACYFR. C134 and C219 are joined by a disulfide. A helical membrane pass occupies residues 138–158; that stretch reads ILLLETVCLASVLNVTALSVE. Residues 159-181 lie on the Cytoplasmic side of the membrane; it reads RYVAVVRPLQAKSVMTRAHVRRM. The chain crosses the membrane as a helical span at residues 182 to 202; sequence VGAIWVLATLFSLPNTSLHGL. Topologically, residues 203–235 are extracellular; sequence SQLTVPCRGPVPDSAICSLVGPMDFYKLVVLTT. A helical membrane pass occupies residues 236-256; the sequence is ALLFFCLPMVTISVLYLLIGL. Residues 257-294 are Cytoplasmic-facing; sequence RLRRERMLLQVEVKGRKTAATQETSHRRIQLQDRGRRQ. A helical transmembrane segment spans residues 295–315; it reads VTKMLFALVVVFGICWAPFHA. Topologically, residues 316 to 339 are extracellular; the sequence is DRIMWSLVYGHSTEGLHLAYQCVH. The helical transmembrane segment at 340-360 threads the bilayer; sequence IASGIFFYLGSAANPVLYSLM. Topologically, residues 361–428 are cytoplasmic; the sequence is STRFRETFLQ…PGCQQETDPS (68 aa).

It belongs to the G-protein coupled receptor 1 family. As to expression, ubiquitously expressed.

It is found in the cell membrane. In terms of biological role, receptor for the neuromedin-U and neuromedin-S neuropeptides. The sequence is that of Neuromedin-U receptor 1 (Nmur1) from Mus musculus (Mouse).